Reading from the N-terminus, the 262-residue chain is Putative cysteine-rich repeat secretory protein 24 (262 aa).

Positions 1 to 29 (MSLSSSVTKHLISASILAIVAMQLPSVHS) are cleaved as a signal peptide. 2 Gnk2-homologous domains span residues 39-141 (YLHH…SIYT) and 147-259 (YKNN…LYPF).

It belongs to the cysteine-rich repeat secretory protein family.

Its subcellular location is the secreted. The protein is Putative cysteine-rich repeat secretory protein 24 (CRRSP24) of Arabidopsis thaliana (Mouse-ear cress).